The sequence spans 400 residues: General L-amino acid transport system permease protein AapQ (400 aa).

A run of 8 helical transmembrane segments spans residues 29 to 49 (SIFY…WVAH), 100 to 120 (LLVA…IGIG), 142 to 162 (IPPL…LPQP), 188 to 208 (TGMI…IIIA), 225 to 245 (VWTA…VSGF), 264 to 284 (VVGP…ASFI), 340 to 360 (NSSL…GTIL), and 367 to 387 (IEIV…TSLF). In terms of domain architecture, ABC transmembrane type-1 spans 96 to 388 (ILNTLLVAVT…SLSILTSLFM (293 aa)).

Belongs to the binding-protein-dependent transport system permease family. HisMQ subfamily.

It is found in the cell inner membrane. Part of a binding-protein-dependent transport system for L-amino acids, affects the uptake as well as efflux of these amino acids. Probably responsible for the translocation of the substrate across the membrane. The chain is General L-amino acid transport system permease protein AapQ (aapQ) from Rhizobium johnstonii (strain DSM 114642 / LMG 32736 / 3841) (Rhizobium leguminosarum bv. viciae).